The sequence spans 407 residues: Succinyl-diaminopimelate desuccinylase (407 aa).

Polar residues predominate over residues 1–10 (MSDIDNNLTS). The tract at residues 1–20 (MSDIDNNLTSQTHQQATHQQ) is disordered. The span at 11–20 (QTHQQATHQQ) shows a compositional bias: low complexity. His-93 contacts Zn(2+). The active site involves Asp-95. Residue Asp-126 participates in Zn(2+) binding. The active-site Proton acceptor is the Glu-160. Residues Glu-161, Glu-189, and His-379 each contribute to the Zn(2+) site.

Belongs to the peptidase M20A family. DapE subfamily. As to quaternary structure, homodimer. It depends on Zn(2+) as a cofactor. Co(2+) is required as a cofactor.

The catalysed reaction is N-succinyl-(2S,6S)-2,6-diaminopimelate + H2O = (2S,6S)-2,6-diaminopimelate + succinate. It functions in the pathway amino-acid biosynthesis; L-lysine biosynthesis via DAP pathway; LL-2,6-diaminopimelate from (S)-tetrahydrodipicolinate (succinylase route): step 3/3. Its function is as follows. Catalyzes the hydrolysis of N-succinyl-L,L-diaminopimelic acid (SDAP), forming succinate and LL-2,6-diaminopimelate (DAP), an intermediate involved in the bacterial biosynthesis of lysine and meso-diaminopimelic acid, an essential component of bacterial cell walls. This Psychrobacter arcticus (strain DSM 17307 / VKM B-2377 / 273-4) protein is Succinyl-diaminopimelate desuccinylase.